Reading from the N-terminus, the 174-residue chain is Matrix protein (174 aa).

In terms of assembly, homomultimer. Interacts with nucleoprotein and with the cytoplasmic domain of glycoprotein.

Its subcellular location is the virion membrane. The protein localises to the host endomembrane system. In terms of biological role, plays a major role in assembly and budding of virion. Completely covers the ribonucleoprotein coil and keep it in condensed bullet-shaped form. Inhibits viral transcription and stimulates replication. The sequence is that of Matrix protein (M) from Hordeum vulgare (Barley).